We begin with the raw amino-acid sequence, 318 residues long: MALENLLHPTNIKIDEYAKNATKFSFEALERGVGYTLGFALKQTMLYSIAGACVTSIKINDGKVTSLEDVIPCDETVADIILNVKSLPVTLAEGVETGTITFELSGSEEEIFSEEAKLSEGLAITEEVFICSYNGGKKLKIEAKVEKGVGFRPAQDNFKDGEFLLDATFSPVVFCDFEIKDARVGRRTDLDKLELNIKTNGNVNCEEALRLAATKIQNQLRNIVDIEEINKGIFVEDPTKDINPILLKHVEELNLTARSSNCLKAVNIRLIGELVQKTENELLKAPNFGKKSLTEIKDKLSELGLSLGTLIENWPQDL.

Residues 1–227 (MALENLLHPT…NQLRNIVDIE (227 aa)) are alpha N-terminal domain (alpha-NTD). An alpha C-terminal domain (alpha-CTD) region spans residues 242–318 (INPILLKHVE…TLIENWPQDL (77 aa)).

It belongs to the RNA polymerase alpha chain family. Homodimer. The RNAP catalytic core consists of 2 alpha, 1 beta, 1 beta' and 1 omega subunit. When a sigma factor is associated with the core the holoenzyme is formed, which can initiate transcription.

It carries out the reaction RNA(n) + a ribonucleoside 5'-triphosphate = RNA(n+1) + diphosphate. Its function is as follows. DNA-dependent RNA polymerase catalyzes the transcription of DNA into RNA using the four ribonucleoside triphosphates as substrates. This Francisella tularensis subsp. novicida (strain U112) protein is DNA-directed RNA polymerase subunit alpha 2.